Consider the following 176-residue polypeptide: NAD(P)H-quinone oxidoreductase subunit 6, chloroplastic (176 aa).

5 consecutive transmembrane segments (helical) span residues 10–30, 32–52, 61–81, 95–115, and 152–172; these read FLLV…VLFT, PIFS…LYIL, AQLL…VMFM, VGDG…ISTI, and FFLP…GAIS.

This sequence belongs to the complex I subunit 6 family. As to quaternary structure, NDH is composed of at least 16 different subunits, 5 of which are encoded in the nucleus.

It localises to the plastid. Its subcellular location is the chloroplast thylakoid membrane. The enzyme catalyses a plastoquinone + NADH + (n+1) H(+)(in) = a plastoquinol + NAD(+) + n H(+)(out). It carries out the reaction a plastoquinone + NADPH + (n+1) H(+)(in) = a plastoquinol + NADP(+) + n H(+)(out). Its function is as follows. NDH shuttles electrons from NAD(P)H:plastoquinone, via FMN and iron-sulfur (Fe-S) centers, to quinones in the photosynthetic chain and possibly in a chloroplast respiratory chain. The immediate electron acceptor for the enzyme in this species is believed to be plastoquinone. Couples the redox reaction to proton translocation, and thus conserves the redox energy in a proton gradient. The sequence is that of NAD(P)H-quinone oxidoreductase subunit 6, chloroplastic (ndhG) from Aethionema grandiflorum (Persian stone-cress).